The chain runs to 237 residues: Bax inhibitor 1 (237 aa).

At 1–29 (MNIFDRKINFDALLKFSHITPSTQQHLKK) the chain is on the cytoplasmic side. K7 participates in a covalent cross-link: Glycyl lysine isopeptide (Lys-Gly) (interchain with G-Cter in ubiquitin). A helical membrane pass occupies residues 30–50 (VYASFALCMFVAAAGAYVHVV). The Lumenal segment spans residues 51 to 52 (TR). The chain crosses the membrane as a helical span at residues 53-73 (FIQAGLLSALGALALMICLMA). Topologically, residues 74–86 (TPHSHETEQKRLG) are cytoplasmic. The chain crosses the membrane as a helical span at residues 87–107 (LLAGFAFLTGVGLGPALELCI). Topologically, residues 108 to 112 (AINPS) are lumenal. Residues 113-133 (ILPTAFMGTAMIFTCFSLSAL) form a helical membrane-spanning segment. Residues 134-139 (YARRRS) lie on the Cytoplasmic side of the membrane. A helical transmembrane segment spans residues 140 to 160 (YLFLGGILMSAMSLMFVSSLG). The Lumenal segment spans residues 161 to 166 (NLFFGS). Residues 167-187 (IWLFQANLYMGLLVMCGFVLF) traverse the membrane as a helical segment. The Cytoplasmic portion of the chain corresponds to 188–206 (DTQLIIEKAEHGDKDYIWH). Positions 207–227 (CIDLFLDFVTLFRKLMLILAF) form an intramembrane region, helical. Topologically, residues 228–237 (NEKDKKKEKK) are cytoplasmic.

It belongs to the BI1 family. Interacts with BCL2 and BCL2L1. Interacts with ERN1. Ubiquitinated by BFAR, leading to proteasomal degradation. Highly abundant in adult testis.

Its subcellular location is the endoplasmic reticulum membrane. In terms of biological role, endoplasmic reticulum (ER)-resident protein that confers cellular protection as an anti-apoptotic protein by limiting multiple stress-inducing pathways surrounding the endoplasmic reticulum and mitochondria. Inhibits the activities of the key sensor for the endoplasmic reticulum unfolded protein response IRE1alpha/ERN1 both directly and by blocking BAX/BAK binding. Modulates ER calcium homeostasis by acting as a calcium-leak channel. Negatively regulates autophagy and autophagosome formation, especially during periods of nutrient deprivation, and reduces cell survival during starvation. This Rattus norvegicus (Rat) protein is Bax inhibitor 1 (Tmbim6).